The primary structure comprises 282 residues: 1-deoxy-11-beta-hydroxypentalenate dehydrogenase (282 aa).

12–36 is an NAD(+) binding site; it reads GAASGIGLALSARFARAGAGVVMAD. Residue Ser-144 coordinates substrate. Tyr-157 functions as the Proton acceptor in the catalytic mechanism. Residue Lys-161 participates in NAD(+) binding. The interval 258–282 is disordered; it reads PPPSPEEELWPVPKTTTATTATTKH. Over residues 267 to 282 the composition is skewed to low complexity; that stretch reads WPVPKTTTATTATTKH.

It belongs to the short-chain dehydrogenases/reductases (SDR) family.

The catalysed reaction is 1-deoxy-11beta-hydroxypentalenate + NAD(+) = 1-deoxy-11-oxopentalenate + NADH + H(+). It participates in antibiotic biosynthesis; pentalenolactone biosynthesis. Catalyzes the oxidation of 1-deoxy-11-beta-hydroxypentalenic acid to 1-deoxy-11-oxopentalenic acid in the biosynthesis of pentalenolactone antibiotic. In Streptomyces arenae, this protein is 1-deoxy-11-beta-hydroxypentalenate dehydrogenase (pntF).